The following is a 101-amino-acid chain: Small ribosomal subunit protein uS10 (101 aa).

This sequence belongs to the universal ribosomal protein uS10 family. In terms of assembly, part of the 30S ribosomal subunit.

In terms of biological role, involved in the binding of tRNA to the ribosomes. This is Small ribosomal subunit protein uS10 from Mycobacterium ulcerans (strain Agy99).